A 60-amino-acid chain; its full sequence is Homeobox protein CHOX-CAD2 (60 aa).

The segment at residues 1–60 (KEKYRVVYTDHQRLELEKEFHCNRYITIRRKSELAVNLGLSERQVKSWFQNRRAKERKII) is a DNA-binding region (homeobox).

It belongs to the Caudal homeobox family.

Its subcellular location is the nucleus. This chain is Homeobox protein CHOX-CAD2 (CHOX-CAD2), found in Gallus gallus (Chicken).